The primary structure comprises 455 residues: GTPase Der (455 aa).

2 EngA-type G domains span residues Pro-4 to Gln-174 and Leu-183 to Asn-358. Residues Gly-10 to Ser-17, Asp-57 to Leu-61, Asn-126 to Asp-129, Gly-189 to Ser-196, Asp-236 to Ile-240, and Asn-301 to Asp-304 contribute to the GTP site. Positions Lys-359–Glu-444 constitute a KH-like domain.

This sequence belongs to the TRAFAC class TrmE-Era-EngA-EngB-Septin-like GTPase superfamily. EngA (Der) GTPase family. As to quaternary structure, associates with the 50S ribosomal subunit.

Its function is as follows. GTPase that plays an essential role in the late steps of ribosome biogenesis. The protein is GTPase Der of Herpetosiphon aurantiacus (strain ATCC 23779 / DSM 785 / 114-95).